Reading from the N-terminus, the 481-residue chain is Serralysin B (481 aa).

A propeptide spanning residues 1 to 15 is cleaved from the precursor; the sequence is MQQNEKASLNTSAAA. H189 contacts Zn(2+). Residue E190 is part of the active site. Residues H193 and Y230 each contribute to the Zn(2+) site. Positions 267, 269, 271, 299, 301, 302, 304, 341, 343, 348, 350, 352, 357, 359, 361, 365, 366, 367, 368, 370, 374, 377, 379, 383, 384, 385, 386, 388, 397, 404, and 414 each coordinate Ca(2+). 3 Hemolysin-type calcium-binding repeats span residues 346–363, 364–381, and 382–399; these read IGGS…DNIL, QGGA…ADTL, and TGGA…QDST.

Belongs to the peptidase M10B family. It depends on Ca(2+) as a cofactor. The cofactor is Zn(2+).

The protein resides in the secreted. The catalysed reaction is Preferential cleavage of bonds with hydrophobic residues in P1'.. This is Serralysin B (prtB) from Dickeya chrysanthemi (Pectobacterium chrysanthemi).